We begin with the raw amino-acid sequence, 298 residues long: tRNA pseudouridine synthase B (298 aa).

Aspartate 39 (nucleophile) is an active-site residue.

The protein belongs to the pseudouridine synthase TruB family. Type 1 subfamily.

It catalyses the reaction uridine(55) in tRNA = pseudouridine(55) in tRNA. Functionally, responsible for synthesis of pseudouridine from uracil-55 in the psi GC loop of transfer RNAs. The protein is tRNA pseudouridine synthase B of Lactobacillus delbrueckii subsp. bulgaricus (strain ATCC BAA-365 / Lb-18).